We begin with the raw amino-acid sequence, 221 residues long: Molybdenum cofactor guanylyltransferase (221 aa).

GTP-binding positions include 18–20 (IAG), Lys-35, Asn-63, Asp-81, and Asp-112. Asp-112 contributes to the Mg(2+) binding site.

The protein belongs to the MobA family. Monomer. The cofactor is Mg(2+).

The protein localises to the cytoplasm. It catalyses the reaction Mo-molybdopterin + GTP + H(+) = Mo-molybdopterin guanine dinucleotide + diphosphate. Its function is as follows. Transfers a GMP moiety from GTP to Mo-molybdopterin (Mo-MPT) cofactor (Moco or molybdenum cofactor) to form Mo-molybdopterin guanine dinucleotide (Mo-MGD) cofactor. This is Molybdenum cofactor guanylyltransferase from Brucella melitensis biotype 2 (strain ATCC 23457).